The sequence spans 61 residues: Potassium channel toxin alpha-KTx 6.6 (61 aa).

Positions Met-1–Gly-23 are cleaved as a signal peptide. Intrachain disulfides connect Cys-29/Cys-50, Cys-35/Cys-55, Cys-39/Cys-57, and Cys-45/Cys-60. Cys-60 is modified (cysteine amide).

Belongs to the short scorpion toxin superfamily. Potassium channel inhibitor family. Alpha-KTx 06 subfamily. Expressed by the venom gland.

Its subcellular location is the secreted. Blocker of voltage-gated potassium channels. This is Potassium channel toxin alpha-KTx 6.6 from Opistophthalmus carinatus (African yellow leg scorpion).